A 225-amino-acid chain; its full sequence is Phosphatidylserine decarboxylase proenzyme (225 aa).

Ser189 (schiff-base intermediate with substrate; via pyruvic acid) is an active-site residue. Residue Ser189 is modified to Pyruvic acid (Ser); by autocatalysis.

The protein belongs to the phosphatidylserine decarboxylase family. PSD-A subfamily. As to quaternary structure, heterodimer of a large membrane-associated beta subunit and a small pyruvoyl-containing alpha subunit. Requires pyruvate as cofactor. In terms of processing, is synthesized initially as an inactive proenzyme. Formation of the active enzyme involves a self-maturation process in which the active site pyruvoyl group is generated from an internal serine residue via an autocatalytic post-translational modification. Two non-identical subunits are generated from the proenzyme in this reaction, and the pyruvate is formed at the N-terminus of the alpha chain, which is derived from the carboxyl end of the proenzyme. The post-translation cleavage follows an unusual pathway, termed non-hydrolytic serinolysis, in which the side chain hydroxyl group of the serine supplies its oxygen atom to form the C-terminus of the beta chain, while the remainder of the serine residue undergoes an oxidative deamination to produce ammonia and the pyruvoyl prosthetic group on the alpha chain.

The protein localises to the cell membrane. The catalysed reaction is a 1,2-diacyl-sn-glycero-3-phospho-L-serine + H(+) = a 1,2-diacyl-sn-glycero-3-phosphoethanolamine + CO2. It participates in phospholipid metabolism; phosphatidylethanolamine biosynthesis; phosphatidylethanolamine from CDP-diacylglycerol: step 2/2. Functionally, catalyzes the formation of phosphatidylethanolamine (PtdEtn) from phosphatidylserine (PtdSer). The chain is Phosphatidylserine decarboxylase proenzyme from Amoebophilus asiaticus (strain 5a2).